The primary structure comprises 833 residues: EF-hand domain-containing family member B (833 aa).

EF-hand domains follow at residues 561–596 (QKFD…ANLS) and 597–632 (LDDK…KDKM). Ca(2+) is bound by residues Asp-574, Asp-578, Met-580, Glu-585, Asp-610, Asp-612, Asp-614, and Glu-621.

As to quaternary structure, microtubule inner protein component of sperm flagellar doublet microtubules. Interacts with STIM1 and ORAI1; the interactions take place upon Ca(2+)-store depletion and dissociate through a Ca(2+)-dependent mechanism. Interaction with STIM1 inhibits STIM1 interaction with SARAF. Expressed in airway epithelial cells.

The protein localises to the cytoplasm. It is found in the cytoskeleton. Its subcellular location is the cilium axoneme. It localises to the flagellum axoneme. Microtubule inner protein (MIP) part of the dynein-decorated doublet microtubules (DMTs) in cilia axoneme, which is required for motile cilia beating. Cytosolic sensor for calcium, modulates the interaction of STIM1 and ORAI1 upon store depletion and the activation of store-operated Ca(2+) entry (SOCE) and NFAT translocation from cytosol to nucleus. The chain is EF-hand domain-containing family member B from Homo sapiens (Human).